We begin with the raw amino-acid sequence, 482 residues long: 3-isopropylmalate dehydratase large subunit (482 aa).

Residues 60–79 (ATPDHNVPTTRAERQGGLES) form a disordered region. [4Fe-4S] cluster contacts are provided by Cys353, Cys414, and Cys417.

This sequence belongs to the aconitase/IPM isomerase family. LeuC type 1 subfamily. In terms of assembly, heterodimer of LeuC and LeuD. [4Fe-4S] cluster serves as cofactor.

The catalysed reaction is (2R,3S)-3-isopropylmalate = (2S)-2-isopropylmalate. The protein operates within amino-acid biosynthesis; L-leucine biosynthesis; L-leucine from 3-methyl-2-oxobutanoate: step 2/4. Its function is as follows. Catalyzes the isomerization between 2-isopropylmalate and 3-isopropylmalate, via the formation of 2-isopropylmaleate. This chain is 3-isopropylmalate dehydratase large subunit, found in Xanthomonas euvesicatoria pv. vesicatoria (strain 85-10) (Xanthomonas campestris pv. vesicatoria).